Here is a 138-residue protein sequence, read N- to C-terminus: Putative pre-16S rRNA nuclease (138 aa).

The protein belongs to the YqgF nuclease family.

It is found in the cytoplasm. Its function is as follows. Could be a nuclease involved in processing of the 5'-end of pre-16S rRNA. This chain is Putative pre-16S rRNA nuclease, found in Escherichia coli O45:K1 (strain S88 / ExPEC).